Reading from the N-terminus, the 314-residue chain is DNA-directed RNA polymerase subunit alpha (314 aa).

The segment at Met1–Thr228 is alpha N-terminal domain (alpha-NTD). The segment at Asn241–Ser314 is alpha C-terminal domain (alpha-CTD).

The protein belongs to the RNA polymerase alpha chain family. In terms of assembly, in cyanobacteria the RNAP catalytic core is composed of 2 alpha, 1 beta, 1 beta', 1 gamma and 1 omega subunit. When a sigma factor is associated with the core the holoenzyme is formed, which can initiate transcription.

The catalysed reaction is RNA(n) + a ribonucleoside 5'-triphosphate = RNA(n+1) + diphosphate. Its function is as follows. DNA-dependent RNA polymerase catalyzes the transcription of DNA into RNA using the four ribonucleoside triphosphates as substrates. The sequence is that of DNA-directed RNA polymerase subunit alpha from Gloeobacter violaceus (strain ATCC 29082 / PCC 7421).